A 437-amino-acid polypeptide reads, in one-letter code: MNYTTQMDAAKKGIVTKEMEIVAKKENMNVKDLMELVSKGKVAIPANKNHKSLDPEGIGQGLRTKINVNLGISKDCYNIDMELEKVQKAIDMKAEAIMDLSCFGKTEEFRKRLIDMSPAIIGTVPIYDAVGFYDKELKDITSEEFLKVAEKHVENGADFLTIHVGMNRKTASTFKKNPRRMNIVSRGGSLLYAWMELNNKENPFYERFDELLDICEKYDVTLSLGDACRPGCIEDSTDASQIEELIALGELTKRAWDRNVQVIIEGPGHMTLDEIETNMKIEKKLCHGAPFYVLGPIVTDIAPGYDHITSAIGGAIAATHGADFLCYVTPAEHLRLPNLDDMKEGIIATKIAAHAADLAKGVKGARDWDNAMAKARRDLDWERMFELSIDEEKARRYREESKAKSKDSCTMCGKMCAVRNMNRVTEGKDLNMLRDDD.

Residues Asn-69, Met-98, Tyr-127, His-163, 185 to 187 (SRG), 226 to 229 (DACR), and Glu-265 contribute to the substrate site. Zn(2+) is bound at residue His-269. Residue Tyr-292 participates in substrate binding. Residue His-333 coordinates Zn(2+). [4Fe-4S] cluster is bound by residues Cys-409, Cys-412, and Cys-416.

The protein belongs to the ThiC family. The cofactor is [4Fe-4S] cluster.

The enzyme catalyses 5-amino-1-(5-phospho-beta-D-ribosyl)imidazole + S-adenosyl-L-methionine = 4-amino-2-methyl-5-(phosphooxymethyl)pyrimidine + CO + 5'-deoxyadenosine + formate + L-methionine + 3 H(+). Its pathway is cofactor biosynthesis; thiamine diphosphate biosynthesis. In terms of biological role, catalyzes the synthesis of the hydroxymethylpyrimidine phosphate (HMP-P) moiety of thiamine from aminoimidazole ribotide (AIR) in a radical S-adenosyl-L-methionine (SAM)-dependent reaction. The polypeptide is Phosphomethylpyrimidine synthase (Clostridium botulinum (strain Loch Maree / Type A3)).